A 253-amino-acid polypeptide reads, in one-letter code: Probable transcriptional regulatory protein AM1_1847 (253 aa).

This sequence belongs to the TACO1 family.

It is found in the cytoplasm. This chain is Probable transcriptional regulatory protein AM1_1847, found in Acaryochloris marina (strain MBIC 11017).